Consider the following 429-residue polypeptide: Ribosomal RNA small subunit methyltransferase B (429 aa).

S-adenosyl-L-methionine contacts are provided by residues 254–260, aspartate 277, aspartate 303, and aspartate 322; that span reads CSAPGGK. The active-site Nucleophile is cysteine 375. The disordered stretch occupies residues 397-419; that stretch reads ALSETGTPDQPGQQNLPGGEEGD. Positions 400 to 412 are enriched in polar residues; the sequence is ETGTPDQPGQQNL.

This sequence belongs to the class I-like SAM-binding methyltransferase superfamily. RsmB/NOP family.

It localises to the cytoplasm. It catalyses the reaction cytidine(967) in 16S rRNA + S-adenosyl-L-methionine = 5-methylcytidine(967) in 16S rRNA + S-adenosyl-L-homocysteine + H(+). In terms of biological role, specifically methylates the cytosine at position 967 (m5C967) of 16S rRNA. The chain is Ribosomal RNA small subunit methyltransferase B from Salmonella dublin (strain CT_02021853).